Consider the following 401-residue polypeptide: 1-deoxy-D-xylulose 5-phosphate reductoisomerase (401 aa).

NADPH is bound by residues T10, G11, S12, I13, N38, and N124. K125 is a 1-deoxy-D-xylulose 5-phosphate binding site. E126 is an NADPH binding site. D150 is a Mn(2+) binding site. Residues S151, E152, S186, and H209 each coordinate 1-deoxy-D-xylulose 5-phosphate. A Mn(2+)-binding site is contributed by E152. An NADPH-binding site is contributed by G215. Residues S222, N227, K228, and E231 each coordinate 1-deoxy-D-xylulose 5-phosphate. Residue E231 participates in Mn(2+) binding.

It belongs to the DXR family. Mg(2+) is required as a cofactor. Mn(2+) serves as cofactor.

It catalyses the reaction 2-C-methyl-D-erythritol 4-phosphate + NADP(+) = 1-deoxy-D-xylulose 5-phosphate + NADPH + H(+). It participates in isoprenoid biosynthesis; isopentenyl diphosphate biosynthesis via DXP pathway; isopentenyl diphosphate from 1-deoxy-D-xylulose 5-phosphate: step 1/6. Functionally, catalyzes the NADPH-dependent rearrangement and reduction of 1-deoxy-D-xylulose-5-phosphate (DXP) to 2-C-methyl-D-erythritol 4-phosphate (MEP). The chain is 1-deoxy-D-xylulose 5-phosphate reductoisomerase from Vibrio campbellii (strain ATCC BAA-1116).